We begin with the raw amino-acid sequence, 390 residues long: tRNA (guanine(26)-N(2))-dimethyltransferase (390 aa).

Residues 4 to 378 enclose the Trm1 methyltransferase domain; sequence HIIEEGLVKI…MPLDELKQLI (375 aa). The S-adenosyl-L-methionine site is built by R37, R67, D85, D112, and A113. Positions 245, 248, 265, and 268 each coordinate Zn(2+).

The protein belongs to the class I-like SAM-binding methyltransferase superfamily. Trm1 family.

It carries out the reaction guanosine(26) in tRNA + 2 S-adenosyl-L-methionine = N(2)-dimethylguanosine(26) in tRNA + 2 S-adenosyl-L-homocysteine + 2 H(+). Dimethylates a single guanine residue at position 26 of a number of tRNAs using S-adenosyl-L-methionine as donor of the methyl groups. This chain is tRNA (guanine(26)-N(2))-dimethyltransferase, found in Methanosphaera stadtmanae (strain ATCC 43021 / DSM 3091 / JCM 11832 / MCB-3).